Consider the following 543-residue polypeptide: EH domain-containing protein 2 (543 aa).

S3 and S44 each carry phosphoserine. The Dynamin-type G domain maps to 55–286 (FDGKPMVLVA…DLFRDIQGLP (232 aa)). The tract at residues 65–72 (GQYSTGKT) is G1 motif. 65-72 (GQYSTGKT) contributes to the ATP binding site. Residues 91–92 (EP) are G2 motif. The G3 motif stretch occupies residues 153–156 (DTPG). The tract at residues 219 to 222 (NKAD) is G4 motif. K220 contacts ATP. A region of interest (G5 motif) is located at residue V243. W258 is an ATP binding site. A mediates membrane-binding region spans residues 320 to 340 (SVFGKENKKKQLIFKLPVIFA). Phosphoserine is present on residues S438, S468, S470, S484, and S493. The 89-residue stretch at 449-537 (DKSKYDEIFY…RRLVPPSKRR (89 aa)) folds into the EH domain. Positions 481-516 (LPNSVLGRIWKLSDVDRDGMLDDEEFALASHLIEAK) constitute an EF-hand domain. The Ca(2+) site is built by D494, D496, D498, M500, and E505. Positions 521 to 543 (GLPTNLPRRLVPPSKRRQKGSAE) are disordered. Residues 534–543 (SKRRQKGSAE) are compositionally biased toward basic residues.

This sequence belongs to the TRAFAC class dynamin-like GTPase superfamily. Dynamin/Fzo/YdjA family. EHD subfamily. As to quaternary structure, homodimer and homooligomer. Interacts with EHD1. May also interact with EHD3 and EHD4. Interacts with MYOF. Interacts with EHBP1. Interacts with FER1L5 (via second C2 domain). Interacts with CAV1 in a cholesterol-dependent manner. Interacts (via EH domain) with PACSIN2 (via NPF motifs); this interaction probably stabilizes the caveolae.

It localises to the cell membrane. Its subcellular location is the membrane. The protein resides in the caveola. It is found in the endosome membrane. The protein localises to the cytoplasm. It localises to the cytosol. The very low intrinsic ATPase activity is increased upon interaction with liposomes. Its function is as follows. ATP- and membrane-binding protein that controls membrane reorganization/tubulation upon ATP hydrolysis. Plays a role in membrane trafficking between the plasma membrane and endosomes. Important for the internalization of GLUT4. Required for fusion of myoblasts to skeletal muscle myotubes. Required for normal translocation of FER1L5 to the plasma membrane. Regulates the equilibrium between cell surface-associated and cell surface-dissociated caveolae by constraining caveolae at the cell membrane. This chain is EH domain-containing protein 2, found in Rattus norvegicus (Rat).